A 319-amino-acid chain; its full sequence is Acetyl-coenzyme A carboxylase carboxyl transferase subunit alpha (319 aa).

In terms of domain architecture, CoA carboxyltransferase C-terminal spans 43–296 (LKQKSVELTQ…KTQLLLDLVE (254 aa)).

Belongs to the AccA family. Acetyl-CoA carboxylase is a heterohexamer composed of biotin carboxyl carrier protein (AccB), biotin carboxylase (AccC) and two subunits each of ACCase subunit alpha (AccA) and ACCase subunit beta (AccD).

Its subcellular location is the cytoplasm. It catalyses the reaction N(6)-carboxybiotinyl-L-lysyl-[protein] + acetyl-CoA = N(6)-biotinyl-L-lysyl-[protein] + malonyl-CoA. Its pathway is lipid metabolism; malonyl-CoA biosynthesis; malonyl-CoA from acetyl-CoA: step 1/1. Its function is as follows. Component of the acetyl coenzyme A carboxylase (ACC) complex. First, biotin carboxylase catalyzes the carboxylation of biotin on its carrier protein (BCCP) and then the CO(2) group is transferred by the carboxyltransferase to acetyl-CoA to form malonyl-CoA. In Blochmanniella floridana, this protein is Acetyl-coenzyme A carboxylase carboxyl transferase subunit alpha.